The sequence spans 304 residues: Acetyl-coenzyme A carboxylase carboxyl transferase subunit beta (304 aa).

In terms of domain architecture, CoA carboxyltransferase N-terminal spans 25-294; it reads VWTKCDSCGQ…PSVVESKADT (270 aa). Cysteine 29, cysteine 32, cysteine 48, and cysteine 51 together coordinate Zn(2+). The segment at 29 to 51 adopts a C4-type zinc-finger fold; sequence CDSCGQVLYRAELERNLEVCPKC.

This sequence belongs to the AccD/PCCB family. In terms of assembly, acetyl-CoA carboxylase is a heterohexamer composed of biotin carboxyl carrier protein (AccB), biotin carboxylase (AccC) and two subunits each of ACCase subunit alpha (AccA) and ACCase subunit beta (AccD). It depends on Zn(2+) as a cofactor.

It is found in the cytoplasm. It catalyses the reaction N(6)-carboxybiotinyl-L-lysyl-[protein] + acetyl-CoA = N(6)-biotinyl-L-lysyl-[protein] + malonyl-CoA. It functions in the pathway lipid metabolism; malonyl-CoA biosynthesis; malonyl-CoA from acetyl-CoA: step 1/1. Its function is as follows. Component of the acetyl coenzyme A carboxylase (ACC) complex. Biotin carboxylase (BC) catalyzes the carboxylation of biotin on its carrier protein (BCCP) and then the CO(2) group is transferred by the transcarboxylase to acetyl-CoA to form malonyl-CoA. The sequence is that of Acetyl-coenzyme A carboxylase carboxyl transferase subunit beta from Yersinia pseudotuberculosis serotype O:1b (strain IP 31758).